Here is a 370-residue protein sequence, read N- to C-terminus: tRNA-specific 2-thiouridylase MnmA (370 aa).

Residues 24–31 (AMSGGVDS) and Leu-50 each bind ATP. Cys-119 (nucleophile) is an active-site residue. Cys-119 and Cys-215 are oxidised to a cystine. An ATP-binding site is contributed by Gly-143. Positions 165-167 (KDQ) are interaction with tRNA. Cys-215 serves as the catalytic Cysteine persulfide intermediate.

This sequence belongs to the MnmA/TRMU family.

It is found in the cytoplasm. The catalysed reaction is S-sulfanyl-L-cysteinyl-[protein] + uridine(34) in tRNA + AH2 + ATP = 2-thiouridine(34) in tRNA + L-cysteinyl-[protein] + A + AMP + diphosphate + H(+). Catalyzes the 2-thiolation of uridine at the wobble position (U34) of tRNA, leading to the formation of s(2)U34. In Wolbachia pipientis wMel, this protein is tRNA-specific 2-thiouridylase MnmA.